The primary structure comprises 62 residues: UPF0434 protein FTL_1400 (62 aa).

Belongs to the UPF0434 family.

In Francisella tularensis subsp. holarctica (strain LVS), this protein is UPF0434 protein FTL_1400.